Reading from the N-terminus, the 347-residue chain is Haptoglobin (347 aa).

Residues 1–18 (MRALGAVITLLLWGQLFA) form the signal peptide. Positions 31–88 (DSCPKPPEIANGYVEHLVRYQCKNYYRLRTEGDGVYALNSEKQWVNKAVGEQLPECEA) constitute a Sushi domain. Intrachain disulfides connect cysteine 52/cysteine 86 and cysteine 90/cysteine 207. In terms of domain architecture, Peptidase S1 spans 103 to 345 (IIGGSLDAKG…ILDWIQKTIA (243 aa)). N-linked (GlcNAc...) asparagine glycans are attached at residues asparagine 148, asparagine 152, asparagine 182, asparagine 230, and asparagine 256. 2 disulfides stabilise this stretch: cysteine 250-cysteine 281 and cysteine 292-cysteine 322. The tract at residues 259 to 264 (VPENKI) is interaction with CD163.

The protein belongs to the peptidase S1 family. Tetramer of two alpha and two beta chains; disulfide-linked. The hemoglobin/haptoglobin complex is composed of a haptoglobin dimer bound to two hemoglobin alpha-beta dimers. Interacts with CD163. Interacts with ERGIC3. Expressed by the liver and secreted in plasma.

The protein localises to the secreted. As a result of hemolysis, hemoglobin is found to accumulate in the kidney and is secreted in the urine. Haptoglobin captures, and combines with free plasma hemoglobin to allow hepatic recycling of heme iron and to prevent kidney damage. Haptoglobin also acts as an antioxidant, has antibacterial activity and plays a role in modulating many aspects of the acute phase response. Hemoglobin/haptoglobin complexes are rapidly cleared by the macrophage CD163 scavenger receptor expressed on the surface of liver Kupfer cells through an endocytic lysosomal degradation pathway. The sequence is that of Haptoglobin (HP) from Oryctolagus cuniculus (Rabbit).